The primary structure comprises 153 residues: Partner of bursicon (153 aa).

A signal peptide spans 1–35; the sequence is MCNSVRTALAASNCCSIVLCCVLLLTLTLTVAVTA. 5 disulfides stabilise this stretch: C44-C102, C68-C117, C77-C143, C81-C145, and C99-C148. The CTCK domain occupies 44-139; sequence CETLPSEIHL…SATMEIRLKE (96 aa).

In terms of assembly, heterodimer of burs and pburs.

It localises to the secreted. Its function is as follows. Final heterodimeric neurohormone released at the end of the molting cycle, involved in the sclerotization (tanning) of the insect cuticle, melanization and wing spreading. This is Partner of bursicon from Anopheles gambiae (African malaria mosquito).